Consider the following 156-residue polypeptide: Small ribosomal subunit protein uS7 (156 aa).

The protein belongs to the universal ribosomal protein uS7 family. In terms of assembly, part of the 30S ribosomal subunit. Contacts proteins S9 and S11.

In terms of biological role, one of the primary rRNA binding proteins, it binds directly to 16S rRNA where it nucleates assembly of the head domain of the 30S subunit. Is located at the subunit interface close to the decoding center, probably blocks exit of the E-site tRNA. The protein is Small ribosomal subunit protein uS7 of Citrifermentans bemidjiense (strain ATCC BAA-1014 / DSM 16622 / JCM 12645 / Bem) (Geobacter bemidjiensis).